Here is a 402-residue protein sequence, read N- to C-terminus: Caspase-1 (402 aa).

A CARD domain is found at 1 to 91 (MADKILRAKR…YLAGILELQS (91 aa)). The propeptide occupies 1–118 (MADKILRAKR…PSSSETKEEQ (118 aa)). Positions 98-125 (FVATEDSKGGHPSSSETKEEQNKEDGTF) are disordered. Basic and acidic residues predominate over residues 113–123 (ETKEEQNKEDG). Residues H236 and C284 contribute to the active site. A propeptide spanning residues 297–314 (SVRDSEEDFLTDAIFEDD) is cleaved from the precursor. S301 bears the Phosphoserine mark. Position 343 is an omega-N-methylarginine (R343).

The protein belongs to the peptidase C14A family. In terms of assembly, heterotetramer that consists of two anti-parallel arranged heterodimers, each one formed by a 20 kDa (Caspase-1 subunit p20) and a 10 kDa (Caspase-1 subunit p10) subunit. May be a component of the inflammasome, a protein complex which also includes PYCARD, CARD8 and NLRP2 and whose function would be the activation of pro-inflammatory caspases. Component of the AIM2 PANoptosome complex, a multiprotein complex that drives inflammatory cell death (PANoptosis). Both the p10 and p20 subunits interact with MEFV. Interacts with CARD17P/INCA and CARD18. Interacts with SERPINB1; this interaction regulates CASP1 activity. Heterotetramer that consists of two anti-parallel arranged heterodimers, each one formed by a 20 kDa (Caspase-1 subunit p20) and a 10 kDa (Caspase-1 subunit p10) subunit. In terms of processing, the two subunits are derived from the precursor sequence by an autocatalytic mechanism. Post-translationally, ubiquitinated via 'Lys-11'-linked polyubiquitination. Deubiquitinated by USP8. As to expression, high level expression seen in spleen and lung, low level expression seen in brain, heart, liver, kidney, testis and skeletal muscle.

It is found in the cytoplasm. The protein localises to the cell membrane. It carries out the reaction Strict requirement for an Asp residue at position P1 and has a preferred cleavage sequence of Tyr-Val-Ala-Asp-|-.. Functionally, thiol protease involved in a variety of inflammatory processes by proteolytically cleaving other proteins, such as the precursors of the inflammatory cytokines interleukin-1 beta (IL1B) and interleukin 18 (IL18) as well as the pyroptosis inducer Gasdermin-D (GSDMD), into active mature peptides. Plays a key role in cell immunity as an inflammatory response initiator: once activated through formation of an inflammasome complex, it initiates a pro-inflammatory response through the cleavage of the two inflammatory cytokines IL1B and IL18, releasing the mature cytokines which are involved in a variety of inflammatory processes. Cleaves a tetrapeptide after an Asp residue at position P1. Also initiates pyroptosis, a programmed lytic cell death pathway, through cleavage of GSDMD. In contrast to cleavage of interleukin IL1B, recognition and cleavage of GSDMD is not strictly dependent on the consensus cleavage site but depends on an exosite interface on CASP1 that recognizes and binds the Gasdermin-D, C-terminal (GSDMD-CT) part. Cleaves and activates CASP7 in response to bacterial infection, promoting plasma membrane repair. Upon inflammasome activation, during DNA virus infection but not RNA virus challenge, controls antiviral immunity through the cleavage of CGAS, rendering it inactive. In apoptotic cells, cleaves SPHK2 which is released from cells and remains enzymatically active extracellularly. In Mus musculus (Mouse), this protein is Caspase-1 (Casp1).